A 398-amino-acid polypeptide reads, in one-letter code: Serpin-ZX (398 aa).

The RCL stretch occupies residues 342 to 366 (GTEAAARTARVVTLRSLPVEPVKVD).

This sequence belongs to the serpin family. In terms of tissue distribution, expressed in roots, coleoptiles, shoots, leaves, embryo and endosperm.

Inhibits chymotrypsin, cathepsin G and trypsin in vitro. The protein is Serpin-ZX (PAZX) of Hordeum vulgare (Barley).